A 184-amino-acid chain; its full sequence is Small ribosomal subunit protein eS8 (184 aa).

A disordered region spans residues M1–K23. Positions S7–K23 are enriched in basic residues.

It belongs to the eukaryotic ribosomal protein eS8 family.

This chain is Small ribosomal subunit protein eS8 (RPS8), found in Theileria annulata.